The following is a 343-amino-acid chain: Mas-related G-protein coupled receptor member F (343 aa).

The Extracellular portion of the chain corresponds to 1 to 44; sequence MAGNCSWEAHSTNQNKMCPGMSEARELYSRGFLTIEQIATLPPP. The N-linked (GlcNAc...) asparagine glycan is linked to asparagine 4. The helical transmembrane segment at 45 to 66 threads the bilayer; the sequence is AVTNYIFLLLCLCGLVGNGLVL. At 67-82 the chain is on the cytoplasmic side; it reads WFFGFSIKRTPFSIYF. A helical transmembrane segment spans residues 83-104; that stretch reads LHLASADGMYLFSKAVIALLNM. Over 105-123 the chain is Extracellular; it reads GTFLGSFPDYIRRVSRIVG. A helical membrane pass occupies residues 124 to 144; that stretch reads LCTFFTGVSLLPAISIERCVS. Residues 145-160 lie on the Cytoplasmic side of the membrane; sequence VIFPTWYWRRRPKRLS. A helical membrane pass occupies residues 161 to 181; that stretch reads AGVCALLWMLSFLVTSIHNYF. Over 182–198 the chain is Extracellular; that stretch reads CMFLGHEAPGTVCRNMD. A helical membrane pass occupies residues 199–220; it reads IALGILLFFLFCPLMVLPCLAL. Topologically, residues 221–241 are cytoplasmic; the sequence is ILHVECRARRRQRSAKLNHVV. The chain crosses the membrane as a helical span at residues 242-263; that stretch reads LAIVSVFLVSSIYLGIDWFLFW. The Extracellular portion of the chain corresponds to 264 to 273; it reads VFQIPAPFPE. Residues 274-294 traverse the membrane as a helical segment; that stretch reads YVTDLCICINSSAKPIVYFLA. At 295–343 the chain is on the cytoplasmic side; the sequence is GRDKSQRLWEPLRVVFQRALRDGAEPGDAASSTPNTVTMEMQCPSGNAS. Residues 318-343 form a disordered region; sequence AEPGDAASSTPNTVTMEMQCPSGNAS. Residues 324–343 show a composition bias toward polar residues; that stretch reads ASSTPNTVTMEMQCPSGNAS.

This sequence belongs to the G-protein coupled receptor 1 family. Mas subfamily.

It is found in the cell membrane. Orphan receptor. May bind to a neuropeptide and may regulate nociceptor function and/or development, including the sensation or modulation of pain. This chain is Mas-related G-protein coupled receptor member F (Mrgprf), found in Mus musculus (Mouse).